We begin with the raw amino-acid sequence, 471 residues long: ATP synthase subunit beta (471 aa).

Residue 153–160 (GGAGVGKT) coordinates ATP.

Belongs to the ATPase alpha/beta chains family. In terms of assembly, F-type ATPases have 2 components, CF(1) - the catalytic core - and CF(0) - the membrane proton channel. CF(1) has five subunits: alpha(3), beta(3), gamma(1), delta(1), epsilon(1). CF(0) has four main subunits: a(1), b(1), b'(1) and c(9-12).

It is found in the cell membrane. It carries out the reaction ATP + H2O + 4 H(+)(in) = ADP + phosphate + 5 H(+)(out). Produces ATP from ADP in the presence of a proton gradient across the membrane. The catalytic sites are hosted primarily by the beta subunits. This chain is ATP synthase subunit beta, found in Roseiflexus sp. (strain RS-1).